A 1578-amino-acid chain; its full sequence is MEELETSLFQTRKAHRIEQMVARWLRRSRDSSARAKVAAADGPARNPTQTLIPVRHTVKIDKDTLLQDYGFHISESLPLTVVAVTAGGSAHGKLFPGDQILQMNNEPAEDLSWERAVDILREAEDSLSITVVRCTSGVPKSSFLTEEKRARLKTNPVKVHFAEEVLISGHSQGNSLLCMPNVLKLYLENGQTKAFKFEANTTVKDIILTVKEKLSIRSIEYFALALEEQYSISRLHLLHEEELIQQVVEREESHDYRCLFRVCFVPKDPLDLLKEDPVAFEYLYLQSCSDVLQERFAVEMKCSSALRLAALHIQERIYACAQPQKISLKYIEKDWGIENFISPTLLRNMKGKDIKKAISFHMKRNQNLLEPRQKQLISAAQLRLNYLQILGELKTYGGRIFNATLMLQDRESYIALLVGAKYGISQVINSKLNIMSTLAEFANISRVELTEESEKVSVVKVYLQDVKVLTLLLESNSAKDLACLIAGYYRLLVDPVTSIFLWPGNKQQAHRVSAEEGYESRACSDSEESSEVDCVLEPLSDRRLVKLAPCRSLIKEEQPPGNSPTPEVARRGPSTCGASSTTDSAESEASDSANTESRGYRTSGSSESMDALEEDDLDTCSSSRSTFFHFGSPGLAESIDSDSQEERSGIETSGFLCLLDLAQRANPQCQKTEFSESAALETFGWAPELSTVRLDPRLYEGSHADYYSLCSSVSPASYLSDSSESTASRQGGAPPAWGQQGWTEAQPSSMLEPLALHPPLAFEDGSSDEEYYDAADKLTPPGPPSGPRDVSTAEPSATSLQNKASTSSPENSLPCGPDGRQPSRRGGVKKYAKTLRKRRSFLQTDYTSQVSFPLVPSASLESVDDVCYYDREPYLALGAPSPTVSSLQDMQGEPGLLETKALGLLAPLRETKSTNPASRVMEMEPETMETKSVIDSRVSSISAIRFRIDPNNKENSGVVPAASSSASTPHCSNPGSSGPDTAQARPSQILPLSQDLDGIAPKEPTIEHGDSSFSLSSGDPNPDRACLASNPGLNNVSQGDTLELQLEPHVQLEMGLESFCTNHIQETAPKYTEPLLSPRDEPRSDECGINPGEKIASIPTKEEPQGQLSLERDREVTNKNGTNVFQEESRKDSGDSPGDVSNNVSQTLDISSPAGKIVTSLSLDAPVTGTEQIPPHPPRDPQGQSREPPGQGCQAQEQKLFVELDLDPDFFLGKQTVSPAVPPEGIKAEAPNHVTGQDIAPRDSPEWVCFNPEPSLPEPLPCPQEDPHLETSNHCLLSEGKSDSSSICLSAEKSFLCFAPESHPEVSASLRVATSLGFAGMNEMVAPRIGMDQCSCQFSYATCFRGPQPETEEEDRDLEAHPMAPLTSPPSAGSPVVLPWRPARAHSCTTAPLSRKSHIWPEYCSRALRQLKATPASTPEGFIQLMESLLELQDILETSWGVGNKHPPEKCTWHFTESRSRLCMGSQKLLSSCRHVIRMDQSPEEMQGAVRDTFQHLVQLAGLCFQFTDCSRCSARHREAAGNLRDVVYTYHQFIEAAKSTCERGYHDLSVKLLARQCTALTAAVFCLTQKFRASTAL.

In terms of domain architecture, PDZ spans 57 to 135; it reads TVKIDKDTLL…SLSITVVRCT (79 aa). The FERM domain maps to 181–496; sequence NVLKLYLENG…GYYRLLVDPV (316 aa). Disordered stretches follow at residues 555–616, 720–743, and 759–831; these read KEEQ…EEDD, SDSS…QGWT, and PLAF…VKKY. A compositionally biased stretch (polar residues) spans 720–729; it reads SDSSESTASR. Low complexity predominate over residues 730-742; that stretch reads QGGAPPAWGQQGW. Positions 793–811 are enriched in polar residues; that stretch reads AEPSATSLQNKASTSSPEN. The span at 822-831 shows a compositional bias: basic residues; that stretch reads PSRRGGVKKY. Residues 924-931 form an important for interaction with GPSM2 region; it reads EPETMETK. Disordered regions lie at residues 950–1030, 1070–1194, and 1347–1374; these read PNNK…LASN, KYTE…QGCQ, and PQPE…SAGS. The segment covering 968–986 has biased composition (polar residues); the sequence is TPHCSNPGSSGPDTAQARP. A compositionally biased stretch (basic and acidic residues) spans 1100–1117; it reads TKEEPQGQLSLERDREVT. Residues 1139-1150 are compositionally biased toward polar residues; it reads DVSNNVSQTLDI.

As to quaternary structure, interacts with GPSM1. Interacts with GPSM2 (via TPR repeat region).

The protein resides in the cytoplasm. The protein localises to the cytosol. It localises to the cell membrane. Its function is as follows. Stabilizes membrane-bound GPSM1, and thereby promotes its interaction with GNAI1. This Homo sapiens (Human) protein is FERM and PDZ domain-containing protein 1 (FRMPD1).